The sequence spans 87 residues: MKAHIHPPYRTVVFHDTSVNEYFKVGSTIRTDRVIELDGETFPYVTIDVSSKSHPYYTGKQKTFASEGSAARFRQRFGGFIDAKRKA.

This sequence belongs to the bacterial ribosomal protein bL31 family. Type B subfamily. As to quaternary structure, part of the 50S ribosomal subunit.

In Klebsiella pneumoniae (strain 342), this protein is Large ribosomal subunit protein bL31B.